The chain runs to 44 residues: Protein PsbN (44 aa).

A helical membrane pass occupies residues 7–29 (VATVFVSCLVLSITGYSLYIGFG).

It belongs to the PsbN family.

The protein resides in the plastid. It localises to the chloroplast thylakoid membrane. Its function is as follows. May play a role in photosystem I and II biogenesis. This Nephroselmis olivacea (Green alga) protein is Protein PsbN.